We begin with the raw amino-acid sequence, 470 residues long: Cyclic AMP receptor-like protein D (470 aa).

The Extracellular segment spans residues 1-16 (MSSCSSLSMDDRVKIG). The helical transmembrane segment at 17–37 (YGSIAGASLSIIGSIGTIILI) threads the bilayer. The Cytoplasmic segment spans residues 38-123 (KIRNKKQEKK…NNNQKTKVSH (86 aa)). The helical transmembrane segment at 124-144 (FIINLSIANLLASIFMITIKL) threads the bilayer. Residues 145 to 176 (MMIHFNDKFIKVLPSTANHSFNALISVCTIGN) lie on the Extracellular side of the membrane. Asn-162 is a glycosylation site (N-linked (GlcNAc...) asparagine). Cysteines 172 and 287 form a disulfide. A helical transmembrane segment spans residues 177–197 (GVIGFSFISTFFWTLAISMYI). Over 198–253 (YQQFLSSSTINSNNNNNNINNINNNNNNNINNINNSKNNNSINNFNNSNKSNKIIK) the chain is Cytoplasmic. The helical transmembrane segment at 254–274 (MLFYFVCWVIPFVLGSILVSG) threads the bilayer. Over 275–295 (SRLIELNSDLPWCSIDSNIQL) the chain is Extracellular. Residues 296-316 (ISFYFPLIICLLATTFFTILI) traverse the membrane as a helical segment. The Cytoplasmic segment spans residues 317-342 (KYKFSNDKLACSSSSLINLQSKIIQR). Residues 343-363 (LILFLIVILVCWVPSLISFFI) form a helical membrane-spanning segment. At 364-372 (SFFSKNCKQ) the chain is on the extracellular side. The chain crosses the membrane as a helical span at residues 373–393 (FLWLEIISSTIQSCQGILNFL). The Cytoplasmic segment spans residues 394 to 470 (SYLSIFKKLK…DFDNNQIQEK (77 aa)).

This sequence belongs to the G-protein coupled receptor 5 family.

The protein resides in the membrane. Functionally, receptor for cAMP. In Dictyostelium discoideum (Social amoeba), this protein is Cyclic AMP receptor-like protein D (crlD).